The chain runs to 485 residues: Glycogen synthase (485 aa).

Lys18 contributes to the ADP-alpha-D-glucose binding site.

Belongs to the glycosyltransferase 1 family. Bacterial/plant glycogen synthase subfamily.

It carries out the reaction [(1-&gt;4)-alpha-D-glucosyl](n) + ADP-alpha-D-glucose = [(1-&gt;4)-alpha-D-glucosyl](n+1) + ADP + H(+). The protein operates within glycan biosynthesis; glycogen biosynthesis. Functionally, synthesizes alpha-1,4-glucan chains using ADP-glucose. In Dechloromonas aromatica (strain RCB), this protein is Glycogen synthase.